Here is a 98-residue protein sequence, read N- to C-terminus: NADH-ubiquinone oxidoreductase chain 4L (98 aa).

The next 3 membrane-spanning stretches (helical) occupy residues 1–21 (MIPT…GMLT), 27–47 (VASL…TALI), and 61–81 (IILL…LISI).

The protein belongs to the complex I subunit 4L family. In terms of assembly, core subunit of respiratory chain NADH dehydrogenase (Complex I) which is composed of 45 different subunits.

It is found in the mitochondrion inner membrane. It catalyses the reaction a ubiquinone + NADH + 5 H(+)(in) = a ubiquinol + NAD(+) + 4 H(+)(out). Core subunit of the mitochondrial membrane respiratory chain NADH dehydrogenase (Complex I) which catalyzes electron transfer from NADH through the respiratory chain, using ubiquinone as an electron acceptor. Part of the enzyme membrane arm which is embedded in the lipid bilayer and involved in proton translocation. This Macaca sylvanus (Barbary macaque) protein is NADH-ubiquinone oxidoreductase chain 4L (MT-ND4L).